Consider the following 245-residue polypeptide: Phosducin (245 aa).

Positions 1–14 (MEEAKSQSLEEDFE) are enriched in acidic residues. Residues 1-68 (MEEAKSQSLE…RDNKDSKERF (68 aa)) form a disordered region. The Phosducin domain occupies 1 to 241 (MEEAKSQSLE…THALDQTNME (241 aa)). Residues 59 to 68 (RDNKDSKERF) are compositionally biased toward basic and acidic residues. The residue at position 73 (serine 73) is a Phosphoserine; by PKA. The thioredoxin fold stretch occupies residues 111 to 245 (YGFVYELETG…DQTNMEEDIE (135 aa)).

Belongs to the phosducin family. Interacts with CRX. Forms a complex with the beta and gamma subunits of the GTP-binding protein, transducin. Post-translationally, light-induced changes in cyclic nucleotide levels modulate the phosphorylation of this protein by cAMP kinase.

It localises to the cytoplasm. The protein localises to the cytosol. The protein resides in the nucleus. It is found in the cell projection. Its subcellular location is the cilium. It localises to the photoreceptor outer segment. The protein localises to the photoreceptor inner segment. Functionally, inhibits the transcriptional activation activity of the cone-rod homeobox CRX. May participate in the regulation of visual phototransduction or in the integration of photoreceptor metabolism. In Felis catus (Cat), this protein is Phosducin (PDC).